The chain runs to 799 residues: Cadherin-8 (799 aa).

Positions 1–29 (MPERLAETLMDLWTPLIILWITLPSCVYT) are cleaved as a signal peptide. Residues 30–61 (APMNQAHVLTTGSPLELSRQSEDMRILSRSKR) constitute a propeptide that is removed on maturation. Cadherin domains are found at residues 62–167 (GWVW…APEF), 168–276 (LNGP…PPKF), 277–391 (AQSL…PPVF), 392–494 (SSPT…DNAP), and 495–616 (EFAS…YVLP). The Extracellular segment spans residues 62–621 (GWVWNQMFVL…AYVLPIGLSM (560 aa)). Residue Asn188 is glycosylated (N-linked (GlcNAc...) asparagine). Residues Asn463, Asn473, and Asn544 are each glycosylated (N-linked (GlcNAc...) asparagine). A helical membrane pass occupies residues 622 to 642 (GALIAILACIILLLVIVVLFV). The Cytoplasmic segment spans residues 643-799 (TLRRHKNEPL…YSVGESDKET (157 aa)). The residue at position 795 (Ser795) is a Phosphoserine.

The protein localises to the cell membrane. Cadherins are calcium-dependent cell adhesion proteins. They preferentially interact with themselves in a homophilic manner in connecting cells; cadherins may thus contribute to the sorting of heterogeneous cell types. The protein is Cadherin-8 (Cdh8) of Mus musculus (Mouse).